A 166-amino-acid polypeptide reads, in one-letter code: Ribosome biogenesis regulatory protein homolog (166 aa).

2 positions are modified to phosphoserine: Ser34 and Ser64. The segment at 144 to 166 is disordered; the sequence is KEKKLTSKQVRNTSKKIKRSRRH. The segment covering 156–166 has biased composition (basic residues); that stretch reads TSKKIKRSRRH.

This sequence belongs to the RRS1 family. In terms of assembly, component of a hexameric 5S RNP precursor complex, composed of 5S RNA, rrs1, rpf2, rpl5a/rpl5b, rpl11a/rpl11b and syo1; this complex acts as a precursor for ribosome assembly. Interacts with sad1.

Its subcellular location is the nucleus. It is found in the nucleolus. Functionally, involved in ribosomal large subunit assembly. This is Ribosome biogenesis regulatory protein homolog from Schizosaccharomyces pombe (strain 972 / ATCC 24843) (Fission yeast).